The following is a 142-amino-acid chain: Large ribosomal subunit protein uL13 (142 aa).

It belongs to the universal ribosomal protein uL13 family. As to quaternary structure, part of the 50S ribosomal subunit.

Its function is as follows. This protein is one of the early assembly proteins of the 50S ribosomal subunit, although it is not seen to bind rRNA by itself. It is important during the early stages of 50S assembly. This is Large ribosomal subunit protein uL13 from Xylella fastidiosa (strain M23).